The sequence spans 1271 residues: Protein flightless-1 homolog (1271 aa).

Methionine 1 is modified (N-acetylmethionine). Residues 1–427 are interaction with LRRFIP1 and LRRFIP2; that stretch reads MEATGVLPFV…SGSKDPLARK (427 aa). 16 LRR repeats span residues 7–32, 33–55, 56–78, 80–103, 104–126, 127–149, 150–173, 175–196, 197–222, 223–245, 247–268, 269–291, 293–316, 317–339, 340–363, and 365–385; these read LPFV…VKAM, TSLR…LAAL, QKLE…LSSL, SLRA…IFKL, DDLS…LENA, KNML…LFIN, LTDL…MRRL, HLQT…QLPA, MMAL…LEGL, SNLS…LYTL, SLRR…IDQW, VHLE…ICKL, KLKK…IGKL, TSLE…LCRC, PKLK…HFLT, and IQVL…PADR. N6-acetyllysine is present on lysine 21. The residue at position 406 (serine 406) is a Phosphoserine. The residue at position 436 (serine 436) is a Phosphoserine; by SGK3. An interaction with ACTL6A region spans residues 495 to 827; it reads VGQLPGLTIW…VVSRSLEGTE (333 aa). 3 Gelsolin-like repeats span residues 509–591, 629–703, and 759–831; these read FVPV…EEFL, NIKL…PGFW, and LMPG…AQVF. Serine 860 carries the phosphoserine modification. Residues 951–977 form a disordered region; the sequence is KTEDKEGKASAEAREGEEAAAEAEEKQ. Over residues 952–967 the composition is skewed to basic and acidic residues; sequence TEDKEGKASAEAREGE. The segment covering 968-977 has biased composition (acidic residues); it reads EAAAEAEEKQ. The stretch at 1183–1256 is one Gelsolin-like 4 repeat; it reads KCSDFCQDDL…VRKGNEQRAF (74 aa).

Interacts with actin, ACTL6A and NCOA2. Interacts with CARM1. Interacts with LRRFIP1, LRRFIP2 and MYD88. Upon LPS stimulation, LRRFIP2 competes for MYD88-binding; LRRFIP1 constitutively blocks the interaction with MyD88, even in the absence of LPS. Interacts with the nuclear receptors ESR1 and THRB. Interacts with SGK3. Interacts (via the gelsolin-like region) with TMOD1 and TMOD3. Interacts with LMOD2, VCL, GSN and DES. In terms of tissue distribution, expressed in blastocyst.

The protein resides in the nucleus. Its subcellular location is the cytoplasm. It localises to the cytoskeleton. It is found in the microtubule organizing center. The protein localises to the centrosome. The protein resides in the cell junction. Its subcellular location is the focal adhesion. It localises to the cell projection. It is found in the podosome. In terms of biological role, is a regulator of actin polymerization, required for proper myofibril organization and regulation of the length of sarcomeric thin filaments. It also plays a role in the assembly of cardiomyocyte cell adhesion complexes. Regulates cytoskeletal rearrangements involved in cytokinesis and cell migration, by inhibiting Rac1-dependent paxillin phosphorylation. May play a role as coactivator in transcriptional activation by hormone-activated nuclear receptors (NR) and acts in cooperation with NCOA2 and CARM1. Involved in estrogen hormone signaling. This Mus musculus (Mouse) protein is Protein flightless-1 homolog (Flii).